Consider the following 465-residue polypeptide: tRNA (guanine(37)-N(1))-methyltransferase (465 aa).

S-adenosyl-L-methionine contacts are provided by residues His189, 227-228 (DL), and 255-256 (DA). Positions 283-362 (YPKEGVPANE…GPGPPPSKPW (80 aa)) are disordered. The segment covering 291-320 (NENSSSNGNHNDVREGSQNGANESSVASTT) has biased composition (polar residues). Positions 343–352 (TKRRNNKRVR) are enriched in basic residues. Asn371 is an S-adenosyl-L-methionine binding site.

The protein belongs to the class I-like SAM-binding methyltransferase superfamily. TRM5/TYW2 family. In terms of assembly, monomer.

The protein localises to the mitochondrion matrix. The protein resides in the nucleus. It is found in the cytoplasm. The catalysed reaction is guanosine(37) in tRNA + S-adenosyl-L-methionine = N(1)-methylguanosine(37) in tRNA + S-adenosyl-L-homocysteine + H(+). Its function is as follows. Specifically methylates the N1 position of guanosine-37 in various cytoplasmic and mitochondrial tRNAs. Methylation is not dependent on the nature of the nucleoside 5' of the target nucleoside. This is the first step in the biosynthesis of wybutosine (yW), a modified base adjacent to the anticodon of tRNAs and required for accurate decoding. In Sorghum bicolor (Sorghum), this protein is tRNA (guanine(37)-N(1))-methyltransferase.